Here is a 474-residue protein sequence, read N- to C-terminus: Adenylyl cyclase-associated protein 1 (474 aa).

The residue at position 2 (Ala2) is an N-acetylalanine. Tyr31 is modified (phosphotyrosine). Ser34 bears the Phosphoserine mark. An N6-acetyllysine modification is found at Lys80. Disordered regions lie at residues 215 to 253 and 277 to 316; these read ELSG…SASR and MKTH…ATKK. Low complexity predominate over residues 217–227; it reads SGLPSGPSVGS. The span at 228–241 shows a compositional bias: pro residues; it reads GPPPPPPGPPPPPI. Lys286 bears the N6-methyllysine mark. 3 positions are modified to phosphoserine: Ser289, Ser294, and Ser300. Pro residues predominate over residues 299-311; that stretch reads FSAPKPQTSPSPK. The residue at position 306 (Thr306) is a Phosphothreonine. Residues Ser307 and Ser309 each carry the phosphoserine modification. The C-CAP/cofactor C-like domain maps to 312-452; that stretch reads PATKKEPALL…EGGDFNEFPV (141 aa). Lys347 is covalently cross-linked (Glycyl lysine isopeptide (Lys-Gly) (interchain with G-Cter in SUMO1)).

Belongs to the CAP family. In terms of assembly, homodimer. Binds actin monomers. Ubiquitous.

It localises to the cell membrane. Directly regulates filament dynamics and has been implicated in a number of complex developmental and morphological processes, including mRNA localization and the establishment of cell polarity. This Mus musculus (Mouse) protein is Adenylyl cyclase-associated protein 1 (Cap1).